The primary structure comprises 721 residues: Long-chain-fatty-acid--CoA ligase ACSBG1 (721 aa).

The segment at 1–64 (MPRGSEAGYC…SHGLELSAPE (64 aa)) is disordered. A compositionally biased stretch (polar residues) spans 26–52 (QQGASLGTSQDNSQTSSLIDGQTLSKE). 4 positions are modified to phosphoserine: serine 34, serine 50, serine 53, and serine 70. ATP contacts are provided by residues 279–287 (TSGTTGNPK), 469–474 (AGYGLS), aspartate 547, and arginine 562. Tyrosine 655 is modified (phosphotyrosine). Lysine 698 contributes to the ATP binding site.

Belongs to the ATP-dependent AMP-binding enzyme family. Bubblegum subfamily. Mainly expressed in brain. Also expressed in adrenal gland and testis. In brain, it is present in cerebral cortical and cerebellar neurons and in steroidogenic cells of the adrenal gland, testis and ovary (at protein level).

The protein resides in the cytoplasm. It localises to the cytoplasmic vesicle. Its subcellular location is the microsome. It is found in the endoplasmic reticulum. The protein localises to the cell membrane. The enzyme catalyses a long-chain fatty acid + ATP + CoA = a long-chain fatty acyl-CoA + AMP + diphosphate. It catalyses the reaction (E)-hexadec-2-enoate + ATP + CoA = (2E)-hexadecenoyl-CoA + AMP + diphosphate. The catalysed reaction is hexadecanoate + ATP + CoA = hexadecanoyl-CoA + AMP + diphosphate. In terms of biological role, catalyzes the conversion of fatty acids such as long-chain and very long-chain fatty acids to their active form acyl-CoAs for both synthesis of cellular lipids, and degradation via beta-oxidation. Can activate diverse saturated, monosaturated and polyunsaturated fatty acids. The chain is Long-chain-fatty-acid--CoA ligase ACSBG1 from Mus musculus (Mouse).